We begin with the raw amino-acid sequence, 456 residues long: Cysteine--tRNA ligase (456 aa).

Position 29 (C29) interacts with Zn(2+). The 'HIGH' region motif lies at 31–41 (VTVYDYCHVGH). Residues C210, H235, and E239 each contribute to the Zn(2+) site. The 'KMSKS' region signature appears at 267–271 (KMSKS). Position 270 (K270) interacts with ATP.

It belongs to the class-I aminoacyl-tRNA synthetase family. As to quaternary structure, monomer. Requires Zn(2+) as cofactor.

It is found in the cytoplasm. It carries out the reaction tRNA(Cys) + L-cysteine + ATP = L-cysteinyl-tRNA(Cys) + AMP + diphosphate. This is Cysteine--tRNA ligase from Hydrogenovibrio crunogenus (strain DSM 25203 / XCL-2) (Thiomicrospira crunogena).